A 712-amino-acid chain; its full sequence is Serrate RNA effector molecule homolog (712 aa).

3 disordered regions span residues 1-80, 214-256, and 620-712; these read MVDS…DSIY, ADIK…TEKS, and QRPV…DDIP. Composition is skewed to basic and acidic residues over residues 8–26 and 34–54; these read GDRR…DYRR and YDNK…SRGD. Over residues 65 to 79 the composition is skewed to polar residues; sequence RSGNGSDLPTESDSI. Residues 214–236 show a composition bias toward basic and acidic residues; sequence ADIKKDENGNGTEQPKEEPEVKQ. Residues 240–251 show a composition bias toward acidic residues; sequence ATEELEEGAIED. Composition is skewed to basic and acidic residues over residues 621–637 and 645–655; these read RPVD…DHRG and GYGRERDDDRG. Residues 656–668 are compositionally biased toward gly residues; that stretch reads PGGGGRNSFGGGG.

This sequence belongs to the ARS2 family.

Its subcellular location is the nucleus. Functionally, acts as a mediator between the cap-binding complex (CBC) and the primary microRNAs (miRNAs) processing machinery. Contributes to the stability and delivery of capped primary miRNA transcripts to the primary miRNA processing complex, thereby playing a role in RNA-mediated gene silencing (RNAi) by miRNAs. The polypeptide is Serrate RNA effector molecule homolog (Caenorhabditis elegans).